A 105-amino-acid chain; its full sequence is Met repressor (105 aa).

The protein belongs to the MetJ family. In terms of assembly, homodimer.

It is found in the cytoplasm. Its function is as follows. This regulatory protein, when combined with SAM (S-adenosylmethionine) represses the expression of the methionine regulon and of enzymes involved in SAM synthesis. This Yersinia enterocolitica serotype O:8 / biotype 1B (strain NCTC 13174 / 8081) protein is Met repressor.